We begin with the raw amino-acid sequence, 466 residues long: MKKFMDKDFLLENEVAKVLYHNYASKVPVFDYHCHLVPMEIATDHKFKNLTEMWLYHDHYKWRAMRSFGIDEEYITGNASDYDKFYQFAKMMPYLIGNPIYHWSHLELKRFFGVEETLSEKTASTIWEKCNKVIENNNLTAKKLIEMANVVYIGTTDDPIDDLRYHKQLKEDINFKCSVNPSFRPEKAMKIQNEGFKEYIGKLAEVSNVEIKSFDDLKKALEIRLDYFYENGCMITDHSLERVVFYKFSCEEINEIFIKALNGENINNEEASKYSVALLISLGKMYAERNMVMQLHIGALRNNNTRMFNRIGADAGFDSIDDGEIAYSLSRILDELDKEDKLPKTILYCLNPKDNEVLGTMIGNFQGGNIAGKIQFGSGWWFNDQKDGMERQMMALSQLGLISQFVGMVTDSRSFLSYTRHEYFRRILCNYLGNLVESGQYPYEEEILGEIVQNICYKNSAKYFKR.

Belongs to the metallo-dependent hydrolases superfamily. Uronate isomerase family.

The enzyme catalyses D-glucuronate = D-fructuronate. It carries out the reaction aldehydo-D-galacturonate = keto-D-tagaturonate. It participates in carbohydrate metabolism; pentose and glucuronate interconversion. The sequence is that of Uronate isomerase from Clostridium perfringens (strain 13 / Type A).